Reading from the N-terminus, the 311-residue chain is Heme A synthase (311 aa).

Residues 1–6 (MQRFIK) lie on the Cytoplasmic side of the membrane. Residues 7-27 (WLAVITSLDLLIVLLGGALVT) form a helical membrane-spanning segment. The Extracellular portion of the chain corresponds to 28-62 (KTGSGQGCGKSWPLCNGEFVPSNLSMETIIELSHR). Cys35 and Cys42 are oxidised to a cystine. Glu58 is a catalytic residue. A heme o-binding site is contributed by His61. The helical transmembrane segment at 63–83 (LTSGSAGILVTLLCILSWKYY) threads the bilayer. Topologically, residues 84-91 (KHVRETKT) are cytoplasmic. The chain crosses the membrane as a helical span at residues 92-112 (LAILSFVFLVAQALMGAAAVV). At 113–121 (WGQMPAVLA) the chain is on the extracellular side. Residues 122–142 (IHFGISLISFASVILLTCLIF) form a helical membrane-spanning segment. Position 123 (His123) interacts with heme o. The Cytoplasmic portion of the chain corresponds to 143–159 (EIDQKFDARSLIMDKKM). A helical transmembrane segment spans residues 160–180 (KFHIYGVTIYSYIVVYTGALV). The Extracellular segment spans residues 181–211 (RHERASLACPDFPLCSKNRPMPTQLHEWVQM). A disulfide bond links Cys189 and Cys195. Residues 212-232 (GHRVAAMLIFAWILYAMILAI) form a helical membrane-spanning segment. A heme b-binding site is contributed by His213. Over 233–243 (RHYKQQPVVYW) the chain is Cytoplasmic. Residues 244 to 264 (GWIISFILVTLQAVVGVLVVF) form a helical membrane-spanning segment. Residues 265–271 (TNASLAM) lie on the Extracellular side of the membrane. The helical transmembrane segment at 272–292 (ALLHSLFISCLFAVLCYLVML) threads the bilayer. His275 provides a ligand contact to heme b. Residues 293 to 311 (GTRSKVNAKEAELTSKQTK) lie on the Cytoplasmic side of the membrane.

Belongs to the COX15/CtaA family. Type 1 subfamily. In terms of assembly, interacts with CtaB. Heme b serves as cofactor.

The protein resides in the cell membrane. It catalyses the reaction Fe(II)-heme o + 2 A + H2O = Fe(II)-heme a + 2 AH2. It functions in the pathway porphyrin-containing compound metabolism; heme A biosynthesis; heme A from heme O: step 1/1. Catalyzes the conversion of heme O to heme A by two successive hydroxylations of the methyl group at C8. The first hydroxylation forms heme I, the second hydroxylation results in an unstable dihydroxymethyl group, which spontaneously dehydrates, resulting in the formyl group of heme A. The sequence is that of Heme A synthase from Bacillus cereus (strain ATCC 14579 / DSM 31 / CCUG 7414 / JCM 2152 / NBRC 15305 / NCIMB 9373 / NCTC 2599 / NRRL B-3711).